Here is a 340-residue protein sequence, read N- to C-terminus: Methionine import ATP-binding protein MetN 1 (340 aa).

The region spanning 2 to 242 (IRLENVSVDF…PQHAYTKQLV (241 aa)) is the ABC transporter domain. 39–46 (GTSGAGKS) contacts ATP.

This sequence belongs to the ABC transporter superfamily. Methionine importer (TC 3.A.1.24) family. As to quaternary structure, the complex is composed of two ATP-binding proteins (MetN), two transmembrane proteins (MetI) and a solute-binding protein (MetQ).

It is found in the cell inner membrane. It catalyses the reaction L-methionine(out) + ATP + H2O = L-methionine(in) + ADP + phosphate + H(+). The catalysed reaction is D-methionine(out) + ATP + H2O = D-methionine(in) + ADP + phosphate + H(+). Its function is as follows. Part of the ABC transporter complex MetNIQ involved in methionine import. Responsible for energy coupling to the transport system. The chain is Methionine import ATP-binding protein MetN 1 from Pectobacterium atrosepticum (strain SCRI 1043 / ATCC BAA-672) (Erwinia carotovora subsp. atroseptica).